Here is a 339-residue protein sequence, read N- to C-terminus: MDRVNSSGHVISVSPSLTNSTGVPTPAPKAIIAAALFMSFIVGTISNGLYLWMLKFKMQRTVNTLLFFHLILSYFISTLILPFMATSFLQDNHWAFGSVLCKVFNSTLSVSMFASVFFLSAISVDRYHLTLHPVWSQQHRTPRWASRIALRIWILATILSIPYLVFRETHDDHKGRIKCQNNYIVGTNWESSEHQTLGQWIHAACFGRRFLLGFLLPFLVIVFCYKRVATKMKDKGLFKSSKPFKVMLTAVVSFFVCWMPYHVHSGLVLTKSQPLPSQLTLGLAVVTISFNTVVSPILYLFTGENFEVFKKSILALFKSTFSDSSATERTQTLNSETEI.

The Extracellular segment spans residues 1 to 30 (MDRVNSSGHVISVSPSLTNSTGVPTPAPKA). 2 N-linked (GlcNAc...) asparagine glycosylation sites follow: Asn5 and Asn19. Residues 31–53 (IIAAALFMSFIVGTISNGLYLWM) traverse the membrane as a helical segment. Residues 54–64 (LKFKMQRTVNT) are Cytoplasmic-facing. A helical membrane pass occupies residues 65–86 (LLFFHLILSYFISTLILPFMAT). Residues 87–103 (SFLQDNHWAFGSVLCKV) lie on the Extracellular side of the membrane. Cys101 and Cys179 are oxidised to a cystine. Residues 104–124 (FNSTLSVSMFASVFFLSAISV) traverse the membrane as a helical segment. The Cytoplasmic portion of the chain corresponds to 125-143 (DRYHLTLHPVWSQQHRTPR). A helical membrane pass occupies residues 144 to 165 (WASRIALRIWILATILSIPYLV). Over 166 to 209 (FRETHDDHKGRIKCQNNYIVGTNWESSEHQTLGQWIHAACFGRR) the chain is Extracellular. A helical membrane pass occupies residues 210 to 230 (FLLGFLLPFLVIVFCYKRVAT). At 231 to 246 (KMKDKGLFKSSKPFKV) the chain is on the cytoplasmic side. The helical transmembrane segment at 247-268 (MLTAVVSFFVCWMPYHVHSGLV) threads the bilayer. Topologically, residues 269 to 283 (LTKSQPLPSQLTLGL) are extracellular. Residues 284-303 (AVVTISFNTVVSPILYLFTG) traverse the membrane as a helical segment. Over 304-339 (ENFEVFKKSILALFKSTFSDSSATERTQTLNSETEI) the chain is Cytoplasmic.

It belongs to the G-protein coupled receptor 1 family.

It is found in the cell membrane. Its function is as follows. Orphan receptor; could be a chemoattractant receptor. The protein is Probable G-protein coupled receptor 33 (Gpr33) of Rattus rattus (Black rat).